The chain runs to 23 residues: U1-ctenitoxin-Co1a (23 aa).

Residues Cys10 and Cys20 are joined by a disulfide bond.

Expressed by the venom gland.

The protein resides in the secreted. Its function is as follows. Insecticidal neurotoxin that reversibly inhibits the N-methyl-D-aspartate (NMDA)-subtype of ionotropic glutamate receptor (GRIN) and inhibits inactivation of insect sodium channels (Nav). In vivo, is highly toxic to insects. The sequence is that of U1-ctenitoxin-Co1a from Ctenus ornatus (Brazilian spider).